The sequence spans 332 residues: L-lactate dehydrogenase A chain (332 aa).

Residues 29-57 (GMVGMASAVSILLKDLCDELALVDVMEDK) and Arg99 contribute to the NAD(+) site. Substrate contacts are provided by Arg106, Asn138, and Arg169. An NAD(+)-binding site is contributed by Asn138. His193 serves as the catalytic Proton acceptor. Residue Thr248 participates in substrate binding.

It belongs to the LDH/MDH superfamily. LDH family. Homotetramer.

It is found in the cytoplasm. The enzyme catalyses (S)-lactate + NAD(+) = pyruvate + NADH + H(+). The protein operates within fermentation; pyruvate fermentation to lactate; (S)-lactate from pyruvate: step 1/1. Its function is as follows. Interconverts simultaneously and stereospecifically pyruvate and lactate with concomitant interconversion of NADH and NAD(+). This is L-lactate dehydrogenase A chain (ldha) from Sphyraena lucasana (Lucas barracuda).